The primary structure comprises 120 residues: uncharacterized protein (120 aa).

It to phage T4 y06Q.

This is an uncharacterized protein from Escherichia coli (strain K12).